The sequence spans 213 residues: Probable nicotinate-nucleotide adenylyltransferase (213 aa).

This sequence belongs to the NadD family.

The enzyme catalyses nicotinate beta-D-ribonucleotide + ATP + H(+) = deamido-NAD(+) + diphosphate. Its pathway is cofactor biosynthesis; NAD(+) biosynthesis; deamido-NAD(+) from nicotinate D-ribonucleotide: step 1/1. In terms of biological role, catalyzes the reversible adenylation of nicotinate mononucleotide (NaMN) to nicotinic acid adenine dinucleotide (NaAD). This Shigella boydii serotype 18 (strain CDC 3083-94 / BS512) protein is Probable nicotinate-nucleotide adenylyltransferase.